Consider the following 109-residue polypeptide: uncharacterized protein (109 aa).

It to M.jannaschii MJ1244 and MJ1245 and M.thermoautotrophicum MTH1110.

This is an uncharacterized protein from Methanococcus maripaludis (Methanococcus deltae).